We begin with the raw amino-acid sequence, 777 residues long: MTKPQGTGGKKKNQLTLAQLAAYDDILTDALVDHAYYWTTIPKNRTSYHPSRGIKEEEITKIIQNHLIVDPDIATAEEKLLATDGLKRFCNTLKTPREQNDFKAHLRRYMSIYLPDCPFEVNATNRYTIVTYEASITARRFIQRNETIKYLAGIQVVITPEEELEMSLRKKDFSLIVSSRSKSTSLFMGPARFANHDCNANARLITRGQAGIEIIACRNIEVGEEITVTYSESYFGENNCDCLCATCESNLRNGWRPVDGEAAVQKSIEDEQPTESSTPYSFRRKRRYGSTALQASRTPSVTPDMRPRVLRKSQSQMMLGERTSTTDSAAQGAGADGQSRKRALEMGTPPFTPTKKQKTTQYPVVPIALSTAPSRGSSDNETSKSPLSFSTTNDNVTDATSQGSESPGPIILSPEPTPIKQAIGLLKQEEGVNEVAVQQVPEAFTPPPSQPTEEEPPMVRPAFERLAARDRMSIANLISGPSSPAPPVVFSVAEVTTHRPKPQTLQLQKTDQTATISTLQTVTAAVQKEAPVVKTESPIKPTVGQVEKITQVQTTTKSCTPSKPKAQAAALPQHHMPVSTAPRGRVPHDYTLTPLLLSEPETAWIMCTHCASAFVQKNAYLTKSTCPRCERHSKLYGYMWPKTEKYGPNDKEERILDHRMINRFLTAEEEARARGRVYWRERMGSKGKQGSSAPSTKGTPAGEKNEQSAKQEQSQGQYVQERFAVRKKVKVQVRSTVPTPVIMTKKDEVAEAAALGLRRSGRARRVSAKLADCELDF.

The SET domain maps to 117–231 (CPFEVNATNR…VGEEITVTYS (115 aa)). Disordered stretches follow at residues 263–414 (AVQK…ILSP) and 682–718 (RMGS…QGQY). Over residues 291–301 (TALQASRTPSV) the composition is skewed to polar residues. Low complexity predominate over residues 323 to 337 (TSTTDSAAQGAGADG). 2 stretches are compositionally biased toward polar residues: residues 371-405 (TAPS…QGSE) and 688-698 (KQGSSAPSTKG).

It belongs to the class V-like SAM-binding methyltransferase superfamily. Histone-lysine methyltransferase family. Suvar4-20 subfamily.

The protein localises to the nucleus. It localises to the chromosome. The enzyme catalyses L-lysyl(20)-[histone H4] + 3 S-adenosyl-L-methionine = N(6),N(6),N(6)-trimethyl-L-lysyl(20)-[histone H4] + 3 S-adenosyl-L-homocysteine + 3 H(+). Functionally, histone methyltransferase that trimethylates 'Lys-20' of histone H4 to form H4K20me3. This is Histone-lysine N-methyltransferase set9 (hlm-1) from Neurospora crassa (strain ATCC 24698 / 74-OR23-1A / CBS 708.71 / DSM 1257 / FGSC 987).